Reading from the N-terminus, the 1023-residue chain is 2-oxoglutarate dehydrogenase complex component E1 (1023 aa).

The N-terminal 40 residues, 1 to 40, are a transit peptide targeting the mitochondrion; sequence MFHLRTCAAKLRPLTASQTVKTFSQNRPAAARTFGQIRCY. Lysine 74 is subject to N6-succinyllysine. A Phosphoserine modification is found at serine 100. 3 residues coordinate Ca(2+): histidine 143, aspartate 156, and aspartate 158. Arginine 312 contacts thiamine diphosphate. The residue at position 401 (lysine 401) is an N6-acetyllysine. Thiamine diphosphate contacts are provided by aspartate 411, asparagine 444, and isoleucine 446. Mg(2+) contacts are provided by aspartate 411, asparagine 444, and isoleucine 446. Lysine 534 is covalently cross-linked (Glycyl lysine isopeptide (Lys-Gly) (interchain with G-Cter in ubiquitin)). The residue at position 564 (lysine 564) is an N6-succinyllysine. Glutamine 676 contributes to the thiamine diphosphate binding site. Lysine 970 carries the post-translational modification N6-acetyllysine.

It belongs to the alpha-ketoglutarate dehydrogenase family. As to quaternary structure, homodimer. The 2-oxoglutarate dehydrogenase complex is composed of OGDH (2-oxoglutarate dehydrogenase; E1), DLST (dihydrolipoamide succinyltransferase; E2), DLD (dihydrolipoamide dehydrogenase; E3) and the assembly factor KGD4. It contains multiple copies of the three enzymatic components (E1, E2 and E3). In the nucleus, the 2-oxoglutarate dehydrogenase complex associates with KAT2A. Interacts with ABHD11; this interaction maintains the functional lipoylation of the 2-oxoglutarate dehydrogenase complex. Thiamine diphosphate is required as a cofactor. It depends on Mg(2+) as a cofactor.

It localises to the mitochondrion. It is found in the nucleus. It carries out the reaction N(6)-[(R)-lipoyl]-L-lysyl-[protein] + 2-oxoglutarate + H(+) = N(6)-[(R)-S(8)-succinyldihydrolipoyl]-L-lysyl-[protein] + CO2. With respect to regulation, calcium ions and ADP stimulate, whereas ATP and NADH reduce catalytic activity. 2-oxoglutarate dehydrogenase (E1o) component of the 2-oxoglutarate dehydrogenase complex (OGDHC). Participates in the first step, rate limiting for the overall conversion of 2-oxoglutarate to succinyl-CoA and CO(2) catalyzed by the whole OGDHC. Catalyzes the irreversible decarboxylation of 2-oxoglutarate (alpha-ketoglutarate) via the thiamine diphosphate (ThDP) cofactor and subsequent transfer of the decarboxylated acyl intermediate on an oxidized dihydrolipoyl group that is covalently amidated to the E2 enzyme (dihydrolipoyllysine-residue succinyltransferase or DLST). Plays a key role in the Krebs (citric acid) cycle, which is a common pathway for oxidation of fuel molecules, including carbohydrates, fatty acids, and amino acids. Can catalyze the decarboxylation of 2-oxoadipate in vitro, but at a much lower rate than 2-oxoglutarate. Mainly active in the mitochondrion. A fraction of the 2-oxoglutarate dehydrogenase complex also localizes in the nucleus and is required for lysine succinylation of histones: associates with KAT2A on chromatin and provides succinyl-CoA to histone succinyltransferase KAT2A. In Bos taurus (Bovine), this protein is 2-oxoglutarate dehydrogenase complex component E1.